Reading from the N-terminus, the 151-residue chain is UPF0179 protein MJ1627 (151 aa).

It belongs to the UPF0179 family.

This chain is UPF0179 protein MJ1627, found in Methanocaldococcus jannaschii (strain ATCC 43067 / DSM 2661 / JAL-1 / JCM 10045 / NBRC 100440) (Methanococcus jannaschii).